Here is a 236-residue protein sequence, read N- to C-terminus: MATTHLDVCAVVPAAGFGRRMQTECPKQYLSIGNQTILEHSVHALLAHPRVTRVVIAISPGDSRFAQLPLANHPQITVVDGGDERADSVLAGLKAAGDVQWVLVHDAARPCLHQDDLARLLALSETSRTGGILAAPVRDTMKRAEPGKNAIAHTVDRNGLWHALTPQFFPRELLHDCLTRALNEGATITDEASALEYCGFHPQLVEGRADNIKVTRPEDLALAEFYLTRTIHQENT.

It belongs to the IspD/TarI cytidylyltransferase family. IspD subfamily. As to quaternary structure, homodimer.

The enzyme catalyses 2-C-methyl-D-erythritol 4-phosphate + CTP + H(+) = 4-CDP-2-C-methyl-D-erythritol + diphosphate. The protein operates within isoprenoid biosynthesis; isopentenyl diphosphate biosynthesis via DXP pathway; isopentenyl diphosphate from 1-deoxy-D-xylulose 5-phosphate: step 2/6. Its function is as follows. Catalyzes the formation of 4-diphosphocytidyl-2-C-methyl-D-erythritol from CTP and 2-C-methyl-D-erythritol 4-phosphate (MEP). This is 2-C-methyl-D-erythritol 4-phosphate cytidylyltransferase from Shigella flexneri serotype 5b (strain 8401).